Here is a 387-residue protein sequence, read N- to C-terminus: Dual specificity mitogen-activated protein kinase kinase mek-2 (387 aa).

Residues 1–37 are disordered; sequence MSSGKRRNPLGLSLPPTVNEQSESGEATAEEATATVP. A compositionally biased stretch (polar residues) spans 16-25; the sequence is PTVNEQSESG. Low complexity predominate over residues 26-35; sequence EATAEEATAT. Positions 73 to 360 constitute a Protein kinase domain; sequence LQTEGELGHG…LKSLTADVFF (288 aa). Residues 79-87 and Lys102 contribute to the ATP site; that span reads LGHGNGGVV. Asp195 (proton acceptor) is an active-site residue. Residues Ser223 and Ser227 each carry the phosphoserine modification.

The protein belongs to the protein kinase superfamily. STE Ser/Thr protein kinase family. MAP kinase kinase subfamily. In terms of assembly, interacts with ksr-1.

It carries out the reaction L-seryl-[protein] + ATP = O-phospho-L-seryl-[protein] + ADP + H(+). It catalyses the reaction L-threonyl-[protein] + ATP = O-phospho-L-threonyl-[protein] + ADP + H(+). The enzyme catalyses L-tyrosyl-[protein] + ATP = O-phospho-L-tyrosyl-[protein] + ADP + H(+). With respect to regulation, activated by tyrosine and threonine phosphorylation catalyzed by MAP kinase kinase kinases. Functionally, functions in the let-60 Ras signaling pathway; acts downstream of lin-45 raf kinase, but before the sur-1/mpk-1 gene product in controlling vulval cell differentiation. Required for progression of developing oocytes through the pachytene stage. Plays a role in responses to M.nematophilum-mediated bacterial infection by promoting tail swelling and preventing constipation. Involved in fluid homeostasis. Positively regulates lifespan upstream of mpk-1. This chain is Dual specificity mitogen-activated protein kinase kinase mek-2 (mek-2), found in Caenorhabditis elegans.